A 544-amino-acid polypeptide reads, in one-letter code: CTP synthase (544 aa).

The interval 1 to 265 (MTKFIFVTGG…DNIITEQLQL (265 aa)) is amidoligase domain. Residue serine 13 coordinates CTP. Serine 13 contributes to the UTP binding site. Residues 14-19 (SLGKGI) and aspartate 71 contribute to the ATP site. Mg(2+) is bound by residues aspartate 71 and glutamate 139. CTP contacts are provided by residues 146–148 (DIE), 186–191 (KTKPTQ), and lysine 222. Residues 186 to 191 (KTKPTQ) and lysine 222 contribute to the UTP site. A Glutamine amidotransferase type-1 domain is found at 290 to 544 (KIAMVGKYVD…VKAALNNKKA (255 aa)). An L-glutamine-binding site is contributed by glycine 353. Catalysis depends on cysteine 380, which acts as the Nucleophile; for glutamine hydrolysis. L-glutamine-binding positions include 381–384 (LGMQ), glutamate 404, and arginine 471. Residues histidine 517 and glutamate 519 contribute to the active site.

It belongs to the CTP synthase family. As to quaternary structure, homotetramer.

It carries out the reaction UTP + L-glutamine + ATP + H2O = CTP + L-glutamate + ADP + phosphate + 2 H(+). It catalyses the reaction L-glutamine + H2O = L-glutamate + NH4(+). The catalysed reaction is UTP + NH4(+) + ATP = CTP + ADP + phosphate + 2 H(+). It functions in the pathway pyrimidine metabolism; CTP biosynthesis via de novo pathway; CTP from UDP: step 2/2. Its activity is regulated as follows. Allosterically activated by GTP, when glutamine is the substrate; GTP has no effect on the reaction when ammonia is the substrate. The allosteric effector GTP functions by stabilizing the protein conformation that binds the tetrahedral intermediate(s) formed during glutamine hydrolysis. Inhibited by the product CTP, via allosteric rather than competitive inhibition. Functionally, catalyzes the ATP-dependent amination of UTP to CTP with either L-glutamine or ammonia as the source of nitrogen. Regulates intracellular CTP levels through interactions with the four ribonucleotide triphosphates. This is CTP synthase from Neisseria meningitidis serogroup C (strain 053442).